The primary structure comprises 414 residues: Transposon Ty4-J Gag polyprotein (414 aa).

Residues 39–115 are a coiled coil; that stretch reads RKVSIKDEQV…IQLLETNENN (77 aa). Positions 378-414 are disordered; sequence GAQRQQPLKSSAKRTKVLEQDTKKVEQSVQQQKTGNY. The segment covering 393-403 has biased composition (basic and acidic residues); the sequence is KVLEQDTKKVE. Polar residues predominate over residues 404–414; sequence QSVQQQKTGNY.

Functionally, capsid protein (CA) is the structural component of the virus-like particle (VLP), forming the shell that encapsulates the retrotransposons dimeric RNA genome. The chain is Transposon Ty4-J Gag polyprotein (TY4A-J) from Saccharomyces cerevisiae (strain ATCC 204508 / S288c) (Baker's yeast).